The sequence spans 360 residues: MNARHARYPFLGDARDAVEEAGVDLARVVTEDDAVVERARERVVSALTDGTIGEPAATVSTRVEVLSYPVARVLVSIVDESVLVRKYATAEADAAYDRFTADESTDTDLKSVSDTTRVSRDTLLSEFDLRAHVHATPDAHTVDVPTYLLLASSLRDDDWRLVNRALDDGRVPVTDAELDTLIREAIRERVADGLPLSVPDQIADALDEPVAAIQDALADLDLTREIDTVVPELFPPCMKHLLDQVQRGDHLPHHARFAITSFLSNVGLSTDEIVDIYEVNPGFGEEMTRYQTDHIQGDSSPTEYTAPSCATMKAYGNCVNPDDLCDAINHPLSYYEVKLDDGDDDDLADWRDREDDDSPD.

Positions 237, 309, 318, and 325 each coordinate [4Fe-4S] cluster. A disordered region spans residues 340 to 360 (DDGDDDDLADWRDREDDDSPD).

This sequence belongs to the eukaryotic-type primase large subunit family. In terms of assembly, heterodimer of a small subunit (PriS) and a large subunit (PriL). [4Fe-4S] cluster serves as cofactor.

Functionally, regulatory subunit of DNA primase, an RNA polymerase that catalyzes the synthesis of short RNA molecules used as primers for DNA polymerase during DNA replication. Stabilizes and modulates the activity of the small subunit, increasing the rate of DNA synthesis, and conferring RNA synthesis capability. The DNA polymerase activity may enable DNA primase to also catalyze primer extension after primer synthesis. May also play a role in DNA repair. The protein is DNA primase large subunit PriL of Halobacterium salinarum (strain ATCC 29341 / DSM 671 / R1).